Consider the following 97-residue polypeptide: Pyrin domain-containing protein 2 (97 aa).

The Pyrin domain maps to 1–94 (MASSAELDFN…SGRADEHCVM (94 aa)).

In terms of assembly, interacts with PYCARD/ASC (via pyrin domain). Interacts with NLRP2 (via pyrin domain). Predominantly expressed in peripheral blood. Weakly expressed in testis.

The protein localises to the cytoplasm. Its subcellular location is the nucleus. May play a role in innate immunity by disrupting the interaction between PYCARD and NLRP3, thereby regulating the NLRP3 inflammasome. May also inhibit NF-kappa-B signaling distally by affecting the nuclear accumulation of RELA. The protein is Pyrin domain-containing protein 2 of Homo sapiens (Human).